Reading from the N-terminus, the 106-residue chain is Large ribosomal subunit protein uL24 (106 aa).

The protein belongs to the universal ribosomal protein uL24 family. Part of the 50S ribosomal subunit.

In terms of biological role, one of two assembly initiator proteins, it binds directly to the 5'-end of the 23S rRNA, where it nucleates assembly of the 50S subunit. One of the proteins that surrounds the polypeptide exit tunnel on the outside of the subunit. In Albidiferax ferrireducens (strain ATCC BAA-621 / DSM 15236 / T118) (Rhodoferax ferrireducens), this protein is Large ribosomal subunit protein uL24.